A 184-amino-acid polypeptide reads, in one-letter code: Inactive ribonuclease-like protein 9 (184 aa).

An N-terminal signal peptide occupies residues 1 to 25; the sequence is MKPLVIKFAWPLPLLLLLLLPPKLQ. 3 disulfide bridges follow: C93-C148, C111-C163, and C118-C125. 2 N-linked (GlcNAc...) asparagine glycosylation sites follow: N147 and N179.

The protein belongs to the pancreatic ribonuclease family.

It is found in the secreted. Its function is as follows. Does not exhibit any ribonuclease activity. The polypeptide is Inactive ribonuclease-like protein 9 (Rnase9) (Mus musculus (Mouse)).